Consider the following 242-residue polypeptide: 1-(5-phosphoribosyl)-5-[(5-phosphoribosylamino)methylideneamino] imidazole-4-carboxamide isomerase (242 aa).

D8 functions as the Proton acceptor in the catalytic mechanism. D129 (proton donor) is an active-site residue.

Belongs to the HisA/HisF family.

It is found in the cytoplasm. The catalysed reaction is 1-(5-phospho-beta-D-ribosyl)-5-[(5-phospho-beta-D-ribosylamino)methylideneamino]imidazole-4-carboxamide = 5-[(5-phospho-1-deoxy-D-ribulos-1-ylimino)methylamino]-1-(5-phospho-beta-D-ribosyl)imidazole-4-carboxamide. Its pathway is amino-acid biosynthesis; L-histidine biosynthesis; L-histidine from 5-phospho-alpha-D-ribose 1-diphosphate: step 4/9. In Erythrobacter litoralis (strain HTCC2594), this protein is 1-(5-phosphoribosyl)-5-[(5-phosphoribosylamino)methylideneamino] imidazole-4-carboxamide isomerase.